The sequence spans 309 residues: MKRKIIVGSRRSKLALTQSNWVINKLKENYPEFDFEIKEIVTKGDRILDVTLSKVGGKGLFVSEVEQALSDEAIDFAVHSMKDVPSSLKEGLIIGAIPKRESPLDCFVFNQVNSLDELPQGSVIGTSSLRRAAQLLKHRPDFVIKPIRGNIDTRLQKLHAENFDAIILAKAGLARMGWLENTTLKLEDIPPEVCLPAVGQGALAIECRESDQQIRDMLTSIHHEETGICVEAERVFLKKLNGGCEIPIAGFATRANEFVQFKGLVGNADGSIILESEQVGANPSEIGNKVAEDLLSEGADTIIKELRNV.

Cysteine 244 is subject to S-(dipyrrolylmethanemethyl)cysteine.

This sequence belongs to the HMBS family. In terms of assembly, monomer. Dipyrromethane serves as cofactor.

The catalysed reaction is 4 porphobilinogen + H2O = hydroxymethylbilane + 4 NH4(+). It functions in the pathway porphyrin-containing compound metabolism; protoporphyrin-IX biosynthesis; coproporphyrinogen-III from 5-aminolevulinate: step 2/4. In terms of biological role, tetrapolymerization of the monopyrrole PBG into the hydroxymethylbilane pre-uroporphyrinogen in several discrete steps. This Listeria monocytogenes serovar 1/2a (strain ATCC BAA-679 / EGD-e) protein is Porphobilinogen deaminase.